Reading from the N-terminus, the 749-residue chain is Protein kinase domain-containing protein ppk32 (749 aa).

Positions 21–317 constitute a Protein kinase domain; sequence IQKENSVQVG…MFELERSPYF (297 aa). Disordered stretches follow at residues 598-677 and 706-749; these read KKLQ…VTAK and PLIP…KSLL. Positions 602-651 are enriched in polar residues; sequence SKPSSVVPNRITTDPFSSQTKEATSKPSSISPNKATTNIFTSQASLSSQG. Phosphoserine is present on serine 632. Low complexity-rich tracts occupy residues 657–670 and 721–735; these read SSAS…QRAS and NRRV…NTVT.

The protein resides in the cytoplasm. The chain is Protein kinase domain-containing protein ppk32 (ppk32) from Schizosaccharomyces pombe (strain 972 / ATCC 24843) (Fission yeast).